A 63-amino-acid polypeptide reads, in one-letter code: Beta-defensin 5 (63 aa).

The first 22 residues, 1–22, serve as a signal peptide directing secretion; it reads MRIHYLLFSFLLVLLSPLSVFT. Gln-23 bears the Pyrrolidone carboxylic acid mark. 3 disulfide bridges follow: Cys-31/Cys-59, Cys-38/Cys-52, and Cys-42/Cys-60.

This sequence belongs to the beta-defensin family.

Its subcellular location is the secreted. Its function is as follows. Has antibacterial activity. The polypeptide is Beta-defensin 5 (Defb5) (Rattus norvegicus (Rat)).